The following is a 417-amino-acid chain: RH-like protein IIF (417 aa).

11 helical membrane passes run 12-32 (CLPL…YFFT), 44-64 (LVAS…GFGF), 77-97 (VAFN…LDGF), 125-145 (ISAG…MVLV), 172-192 (FYLF…KPLP), 203-223 (TIPS…WPSF), 238-258 (VFNT…GSSL), 265-285 (ISMT…GTSC), 287-307 (LIPS…ISIG), 331-351 (NFSL…VRHT), and 358-378 (MIGF…AIAL).

This sequence belongs to the ammonium transporter (TC 2.A.49) family. Rh subfamily.

The protein resides in the membrane. May be part of an oligomeric complex which is likely to have a transport or channel function in the erythrocyte membrane. In Pan troglodytes (Chimpanzee), this protein is RH-like protein IIF.